Consider the following 95-residue polypeptide: Co-chaperonin GroES (95 aa).

It belongs to the GroES chaperonin family. As to quaternary structure, heptamer of 7 subunits arranged in a ring. Interacts with the chaperonin GroEL.

It localises to the cytoplasm. Functionally, together with the chaperonin GroEL, plays an essential role in assisting protein folding. The GroEL-GroES system forms a nano-cage that allows encapsulation of the non-native substrate proteins and provides a physical environment optimized to promote and accelerate protein folding. GroES binds to the apical surface of the GroEL ring, thereby capping the opening of the GroEL channel. The chain is Co-chaperonin GroES from Rickettsia conorii (strain ATCC VR-613 / Malish 7).